The sequence spans 360 residues: Histidinol-phosphate aminotransferase (360 aa).

Lys-221 carries the post-translational modification N6-(pyridoxal phosphate)lysine.

The protein belongs to the class-II pyridoxal-phosphate-dependent aminotransferase family. Histidinol-phosphate aminotransferase subfamily. In terms of assembly, homodimer. Requires pyridoxal 5'-phosphate as cofactor.

The catalysed reaction is L-histidinol phosphate + 2-oxoglutarate = 3-(imidazol-4-yl)-2-oxopropyl phosphate + L-glutamate. It functions in the pathway amino-acid biosynthesis; L-histidine biosynthesis; L-histidine from 5-phospho-alpha-D-ribose 1-diphosphate: step 7/9. This chain is Histidinol-phosphate aminotransferase, found in Desulfitobacterium hafniense (strain DSM 10664 / DCB-2).